The sequence spans 596 residues: Genetic interactor of prohibitins 3, mitochondrial (596 aa).

The N-terminal 21 residues, 1–21, are a transit peptide targeting the mitochondrion; sequence MLNLCHALRGVRQFSCSVIVK. In terms of domain architecture, CP-type G spans 113–305; the sequence is ESTLNDILNY…LFDLPGYSTS (193 aa).

The protein belongs to the TRAFAC class YlqF/YawG GTPase family. GEP3 subfamily.

It is found in the mitochondrion. Functionally, interacts genetically with prohibitins and thus may be involved in the mitochondrial lipid metabolism. In Saccharomyces cerevisiae (strain AWRI796) (Baker's yeast), this protein is Genetic interactor of prohibitins 3, mitochondrial (GEP3).